The chain runs to 152 residues: Vasotocin-neurophysin VT 1 (152 aa).

The signal sequence occupies residues 1–19 (MSDSFLPTCILCLLALSSA). A disulfide bond links Cys-20 and Cys-25. Gly-28 carries the glycine amide modification. Disulfide bonds link Cys-40–Cys-84, Cys-43–Cys-57, Cys-51–Cys-74, Cys-58–Cys-64, Cys-91–Cys-103, Cys-97–Cys-115, and Cys-104–Cys-109.

It belongs to the vasopressin/oxytocin family.

The protein localises to the secreted. In terms of biological role, vasotocin is an antidiuretic hormone. The protein is Vasotocin-neurophysin VT 1 of Catostomus commersonii (White sucker).